Here is a 1331-residue protein sequence, read N- to C-terminus: ABC multidrug transporter MDR2 (1331 aa).

Positions 1 to 50 are disordered; the sequence is MVEPSEKPNTQNDDVSKQEIRNPVSSSSSTSDKEKVAKKGNSDATKSLTP. Positions 31–41 are enriched in basic and acidic residues; sequence SDKEKVAKKGN. Helical transmembrane passes span 93 to 113, 147 to 167, 219 to 239, and 242 to 262; these read MILL…LPLF, YFVY…VGFI, KVGL…IGYV, and WKLA…MGGI. The ABC transmembrane type-1 1 domain maps to 97 to 387; the sequence is AIVSLASIAA…VAPNTQAFAS (291 aa). N-linked (GlcNAc...) asparagine glycosylation occurs at Asn-293. 2 consecutive transmembrane segments (helical) span residues 325 to 345 and 358 to 378; these read LGIM…LGFW and LSAI…IGNV. The region spanning 422–667 is the ABC transporter 1 domain; that stretch reads IEFRGIKHIY…KGTYLQLVEA (246 aa). Residue 457–464 participates in ATP binding; that stretch reads GPSGSGKS. A glycan (N-linked (GlcNAc...) asparagine) is linked at Asn-529. 2 consecutive transmembrane segments (helical) span residues 762-782 and 808-828; these read LCGF…SVFF and LMFL…GVIF. An ABC transmembrane type-1 2 domain is found at 764-1051; that stretch reads GFFFAVLSGA…VFSFSPDMGK (288 aa). An N-linked (GlcNAc...) asparagine glycan is attached at Asn-860. The next 4 helical transmembrane spans lie at 884–904, 910–930, 995–1015, and 1025–1045; these read LGTI…ALAF, LVCI…FWIL, ASQS…GGLL, and FFLC…VFSF. One can recognise an ABC transporter 2 domain in the interval 1086–1324; it reads IEFRDVHFRY…KGRYYELVHM (239 aa). Residue Asn-1108 is glycosylated (N-linked (GlcNAc...) asparagine). Residue 1121–1128 coordinates ATP; the sequence is GPSGCGKS.

This sequence belongs to the ABC transporter superfamily. ABCB family. Multidrug resistance exporter (TC 3.A.1.201) subfamily.

The protein localises to the cell membrane. The enzyme catalyses itraconazole(in) + ATP + H2O = itraconazole(out) + ADP + phosphate + H(+). ABC-type efflux transporter involved in the modulation susceptibility to itraconazole. The chain is ABC multidrug transporter MDR2 from Trichophyton rubrum (strain ATCC MYA-4607 / CBS 118892) (Athlete's foot fungus).